Here is an 857-residue protein sequence, read N- to C-terminus: MEGFSDGYYDAQYTVPASDHRVEYPLSSSDHYAQAMMPFATPDQMHAAGFAYQSQIPDLVANSASFVFPSHTAGLSLNLPEHPMPAENLGDRTSNAMLLYDPLSALGGSTPTAINTGDPFAYNAFQSPFPAMSLENFQGQQSLSFHNTCLPSQPMNLNPSVAYSTMQTHGPILNTYQAPPRHAELTTSAKPTGTLDKQPSTNFPQPAGQTSQRRRNRGFQSSGPTPTHRFIQPKRPSPTKAPLPPHPKSAAGETSQYASIYSSSGFDIMGVLAEVVSRPNPKINIGAVDLSCAFVLCDITQNDHPIIYVSEAFERLTGYTEQEIVGQNCRFLQGPEGVVQKGMKRTFVDDETTSRLRSTIEDRTEIQASLINYRKGGQPFMNLITMIPIRWSSQEYRFYVGFQVDLVETPDAVTRRNPNGTYTINYQRSRLPNYVVPPPDLYRSHPDLTTWFTTDQVSTILKSLNNSTLTYRNYLDRVLVENTDDIIHALSLEGEFLYLSPSCRKVLEYEPIELVGKTLSTVCHPSDIGPVIRDLRACTTTDPVSVVFRIRKKYSGYIWFESHGSWRMGERGRQFMVLVGRPRFVYCLDHIASIGHGSLAETDVWAKLSKSGIVLFMTSKARPVLGRMPDELIGKSLQDLMDSRAEAQKALGVARTGQRVTFSHKIRHKKGHMLPAQTTLHPGDTKEGVRPSFLVAHISFPKPPQGGNDELNSAPPPNRNLAVSKIHRQAVSGVSGVAGQNMLASVKQANPQIQKLPFFTELVPTRGSSWQVELRELEKQNRTLSDELQKLLTRRKKRKRKQSTASVEKSCAICQTKKTPEWRRGPSGERDLCNSCGLRWAKQVRNAAQVAGRPNAY.

PAS domains follow at residues 306–328, 479–542, and 608–642; these read IIYV…VGQN, LVEN…TTTD, and LSKS…DLMD. The segment at 811-836 adopts a GATA-type zinc-finger fold; the sequence is CAICQTKKTPEWRRGPSGERDLCNSC.

Transcription factor that acts as a blue light sensor. Plays crucial roles in fungal growth and asexual development. Involved in conidiophore formation, sclerotium production, and conidial stress tolerance. Promotes conidiation by inducing the expression of brlA and abaA. Positively regulates the fungal pathogenicity towards maize. In blue light conditions, inhibits aflatoxin B1 (AFB1) biosynthesis by down-regulating the expression of key genes such as aflA, aflJ, aflH, aflO and aflK. This Aspergillus flavus protein is Blue light receptor lreA.